The chain runs to 369 residues: Chromatin modification-related protein EAF3 (369 aa).

Positions 9–97 (TVYAYHGPLI…WDEWVGIDRI (89 aa)) constitute a Tudor-knot domain. 2 disordered regions span residues 43-66 (PLEEKPNSSGNHHHHHHSQHIAKF) and 126-191 (IIVN…NKSK). Positions 53–62 (NHHHHHHSQH) are enriched in basic residues. A compositionally biased stretch (low complexity) spans 126 to 135 (IIVNATTKNH). A compositionally biased stretch (basic residues) spans 136–149 (TNNKNKKESNKRKS). Residues 150 to 191 (SSATTTSGVTAGTNNNKKQKSASTSTTNNTSGNSGTTSNKSK) are compositionally biased toward low complexity. The 176-residue stretch at 193–368 (ILSRLNLNFP…TSPQYDSLAR (176 aa)) folds into the MRG domain.

Belongs to the MRG family. Component of the NuA4 histone acetyltransferase complex.

The protein resides in the nucleus. Functionally, involved in deacetylation of histones, chromatin assembly and chromosome segregation. May act as a transcriptional oscillator, directing histone deacetylases to specific chromosomal domains. Component of the NuA4 histone acetyltransferase complex which is involved in transcriptional activation of selected genes principally by acetylation of nucleosomal histone H4 and H2A. The NuA4 complex is also involved in DNA repair. The polypeptide is Chromatin modification-related protein EAF3 (EAF3) (Candida albicans (strain SC5314 / ATCC MYA-2876) (Yeast)).